A 943-amino-acid chain; its full sequence is Mechanosensitive ion channel protein BA (943 aa).

The tract at residues 1–67 (MPNPNDVTID…PPSSSLGFGH (67 aa)) is disordered. Residues 1-107 (MPNPNDVTID…AVLNFSTVTR (107 aa)) are Cytoplasmic-facing. Over residues 14–37 (TSVSSRGQTGARNNSTNIPNSPSG) the composition is skewed to polar residues. Residues 108 to 130 (YLIYIAPLAALLAIPIIVGATAA) form a helical membrane-spanning segment. Residues 131-149 (EDAKIGGVSLPWFFCWVEV) are Lumenal-facing. A helical transmembrane segment spans residues 150–175 (VWVSLWVCKLVAKVIPFVFQFVCGIV). The Cytoplasmic segment spans residues 176-195 (SAGTRKYALILRNLEIPITM). A helical membrane pass occupies residues 196-214 (VLWMIVSLVTFLPIMVYNP). At 215 to 233 (RNKREGDTETKSWEKSVKN) the chain is on the lumenal side. Residues 234–259 (VLFAFLVCALIFLGEKTLVQLISISY) traverse the membrane as a helical segment. The Cytoplasmic portion of the chain corresponds to 260 to 468 (HRKQFDARIK…DQAIHVLDNL (209 aa)). The EF-hand domain occupies 412–447 (GKEAEAEECFTMLDRDGNGDISLDEIILAISEIGRT). Residues Asp425, Asp427, Asn429, Asp431, and Glu436 each contribute to the Ca(2+) site. The helical transmembrane segment at 469–489 (LATIAFIIAVLVFVSFVTSGF) threads the bilayer. At 490-502 (GTVIAAGATSLLS) the chain is on the lumenal side. The helical transmembrane segment at 503–523 (LSFVFATTAQEVLGSCIFLFV) threads the bilayer. Residues 524-943 (KHPFDIGDRV…QRRNYESRRL (420 aa)) are Cytoplasmic-facing. The interval 677–943 (PGAAAEDAAA…QRRNYESRRL (267 aa)) is disordered. 2 stretches are compositionally biased toward low complexity: residues 678–687 (GAAAEDAAAA) and 744–759 (GASA…AGSA). Positions 760-781 (YSETTLNNTVSEPYQRSFTPNT) are enriched in polar residues. Residues 798 to 810 (TERHLGVSHDSIA) are compositionally biased toward basic and acidic residues. Positions 827–842 (TTANQSLASPTTMQSE) are enriched in polar residues. Residues 857 to 880 (PSSSQYSQQYPQQQSQSPYSYTYS) are compositionally biased toward low complexity. Over residues 886 to 904 (PESSLQPLEHTTSYNQSLP) the composition is skewed to polar residues. A compositionally biased stretch (basic and acidic residues) spans 916–943 (NSLEGHSPHVDPRHMTEEQRRNYESRRL).

This sequence belongs to the MscS (TC 1.A.23) family.

The protein localises to the cell membrane. It catalyses the reaction Ca(2+)(in) = Ca(2+)(out). Functionally, acts as a mechanosensitive calcium channel in response to membrane stretch. Regulates intracellular calcium levels and cell volume for survival in response to hypo-osmotic shock. Involved in maintaining vacuole integrity and protecting the nuclear envelope upon hypo-osmotic shock. seems to contribute to CaCl2 toxicityIn contracstz to mscA, mscB seems to contribute to CaCl(2) toxicity. The polypeptide is Mechanosensitive ion channel protein BA (Emericella nidulans (strain FGSC A4 / ATCC 38163 / CBS 112.46 / NRRL 194 / M139) (Aspergillus nidulans)).